The sequence spans 154 residues: Protein X (154 aa).

The tract at residues 68 to 117 (PCALRFTSARRMETTVNAHQVLPKVLHKRTLGLSAMSTTDLEAYFKDCLF) is mitochondrial targeting sequence.

This sequence belongs to the orthohepadnavirus protein X family. As to quaternary structure, may form homodimer. May interact with host CEBPA, CFLAR, CREB1, DDB1, E4F1, HBXIP, HSPD1/HSP60, NFKBIA, POLR2E and SMAD4. Interacts with host SMC5-SMC6 complex and induces its degradation. Interacts with host TRPC4AP; leading to prevent ubiquitination of TRPC4AP. Interacts with host PLSCR1; this interaction promotes ubiquitination and degradation of HBx and impairs HBx-mediated cell proliferation. A fraction may be phosphorylated in insect cells and HepG2 cells, a human hepatoblastoma cell line. Phosphorylated in vitro by host protein kinase C or mitogen-activated protein kinase. N-acetylated in insect cells.

The protein localises to the host cytoplasm. Its subcellular location is the host nucleus. It localises to the host mitochondrion. Its function is as follows. Multifunctional protein that plays a role in silencing host antiviral defenses and promoting viral transcription. Does not seem to be essential for HBV infection. May be directly involved in development of cirrhosis and liver cancer (hepatocellular carcinoma). Most of cytosolic activities involve modulation of cytosolic calcium. The effect on apoptosis is controversial depending on the cell types in which the studies have been conducted. May induce apoptosis by localizing in mitochondria and causing loss of mitochondrial membrane potential. May also modulate apoptosis by binding host CFLAR, a key regulator of the death-inducing signaling complex (DISC). Promotes viral transcription by using the host E3 ubiquitin ligase DDB1 to target the SMC5-SMC6 complex to proteasomal degradation. This host complex would otherwise bind to viral episomal DNA, and prevents its transcription. Moderately stimulates transcription of many different viral and cellular transcription elements. Promoters and enhancers stimulated by HBx contain DNA binding sites for NF-kappa-B, AP-1, AP-2, c-EBP, ATF/CREB, or the calcium-activated factor NF-AT. In Hepatitis B virus genotype C subtype adr (isolate Japan/Nishioka/1983) (HBV-C), this protein is Protein X.